A 219-amino-acid chain; its full sequence is uncharacterized protein (219 aa).

An RRM domain is found at 30–107; the sequence is FRLFVGNLGN…RPVKLSRATS (78 aa). A compositionally biased stretch (basic residues) spans 140-149; that stretch reads KKIKNKHGKN. Residues 140-219 form a disordered region; that stretch reads KKIKNKHGKN…YSRASSFRRV (80 aa). The span at 150 to 169 shows a compositional bias: low complexity; the sequence is SSKSSRAAQSAAAELISSSS. A compositionally biased stretch (polar residues) spans 176–186; the sequence is ANSTSVPNAVN.

This is an uncharacterized protein from Schizosaccharomyces pombe (strain 972 / ATCC 24843) (Fission yeast).